Consider the following 455-residue polypeptide: Ribosomal protein uS12 methylthiotransferase RimO (455 aa).

The MTTase N-terminal domain occupies 21–131; it reads GKVGFISLGC…VVGAVHQYVP (111 aa). C30, C66, C95, C164, C168, and C171 together coordinate [4Fe-4S] cluster. Residues 150 to 387 form the Radical SAM core domain; the sequence is LTPRHYAYLK…MAKQAEISAA (238 aa). The region spanning 390–455 is the TRAM domain; that stretch reads QAKIGRTIDV…DEHDLWARLI (66 aa).

Belongs to the methylthiotransferase family. RimO subfamily. The cofactor is [4Fe-4S] cluster.

Its subcellular location is the cytoplasm. It catalyses the reaction L-aspartate(89)-[ribosomal protein uS12]-hydrogen + (sulfur carrier)-SH + AH2 + 2 S-adenosyl-L-methionine = 3-methylsulfanyl-L-aspartate(89)-[ribosomal protein uS12]-hydrogen + (sulfur carrier)-H + 5'-deoxyadenosine + L-methionine + A + S-adenosyl-L-homocysteine + 2 H(+). Functionally, catalyzes the methylthiolation of an aspartic acid residue of ribosomal protein uS12. This is Ribosomal protein uS12 methylthiotransferase RimO from Marinobacter nauticus (strain ATCC 700491 / DSM 11845 / VT8) (Marinobacter aquaeolei).